A 217-amino-acid chain; its full sequence is Uracil-DNA glycosylase (217 aa).

D62 (proton acceptor) is an active-site residue.

Belongs to the uracil-DNA glycosylase (UDG) superfamily. UNG family.

Its subcellular location is the cytoplasm. The enzyme catalyses Hydrolyzes single-stranded DNA or mismatched double-stranded DNA and polynucleotides, releasing free uracil.. Its function is as follows. Excises uracil residues from the DNA which can arise as a result of misincorporation of dUMP residues by DNA polymerase or due to deamination of cytosine. This Streptococcus pneumoniae (strain Hungary19A-6) protein is Uracil-DNA glycosylase.